We begin with the raw amino-acid sequence, 201 residues long: Pyridoxal 5'-phosphate synthase subunit PdxT (201 aa).

An L-glutamine-binding site is contributed by 49–51 (GES). C81 serves as the catalytic Nucleophile. L-glutamine is bound by residues R110 and 139 to 140 (IR). Active-site charge relay system residues include H180 and E182.

The protein belongs to the glutaminase PdxT/SNO family. In the presence of PdxS, forms a dodecamer of heterodimers. Only shows activity in the heterodimer.

It catalyses the reaction aldehydo-D-ribose 5-phosphate + D-glyceraldehyde 3-phosphate + L-glutamine = pyridoxal 5'-phosphate + L-glutamate + phosphate + 3 H2O + H(+). It carries out the reaction L-glutamine + H2O = L-glutamate + NH4(+). It participates in cofactor biosynthesis; pyridoxal 5'-phosphate biosynthesis. Functionally, catalyzes the hydrolysis of glutamine to glutamate and ammonia as part of the biosynthesis of pyridoxal 5'-phosphate. The resulting ammonia molecule is channeled to the active site of PdxS. In Salinispora arenicola (strain CNS-205), this protein is Pyridoxal 5'-phosphate synthase subunit PdxT.